The chain runs to 393 residues: Lipid-A-disaccharide synthase (393 aa).

This sequence belongs to the LpxB family.

The enzyme catalyses a lipid X + a UDP-2-N,3-O-bis[(3R)-3-hydroxyacyl]-alpha-D-glucosamine = a lipid A disaccharide + UDP + H(+). It participates in bacterial outer membrane biogenesis; LPS lipid A biosynthesis. Condensation of UDP-2,3-diacylglucosamine and 2,3-diacylglucosamine-1-phosphate to form lipid A disaccharide, a precursor of lipid A, a phosphorylated glycolipid that anchors the lipopolysaccharide to the outer membrane of the cell. This Granulibacter bethesdensis (strain ATCC BAA-1260 / CGDNIH1) protein is Lipid-A-disaccharide synthase.